Consider the following 155-residue polypeptide: Large ribosomal subunit protein uL15 (155 aa).

A compositionally biased stretch (basic residues) spans 1 to 16 (MVRRFKRAVKYRRGSR). A disordered region spans residues 1–35 (MVRRFKRAVKYRRGSRTHGWGRVGQHRKSGGSGGK).

The protein belongs to the universal ribosomal protein uL15 family. In terms of assembly, part of the 50S ribosomal subunit.

Its function is as follows. Binds to the 23S rRNA. This Pyrobaculum arsenaticum (strain DSM 13514 / JCM 11321 / PZ6) protein is Large ribosomal subunit protein uL15.